Consider the following 573-residue polypeptide: Dihydroxy-acid dehydratase (573 aa).

Residue cysteine 62 coordinates [2Fe-2S] cluster. Aspartate 94 provides a ligand contact to Mg(2+). Position 135 (cysteine 135) interacts with [2Fe-2S] cluster. Mg(2+) contacts are provided by aspartate 136 and lysine 137. Lysine 137 bears the N6-carboxylysine mark. Cysteine 212 lines the [2Fe-2S] cluster pocket. Glutamate 463 serves as a coordination point for Mg(2+). Serine 489 functions as the Proton acceptor in the catalytic mechanism.

It belongs to the IlvD/Edd family. In terms of assembly, homodimer. It depends on [2Fe-2S] cluster as a cofactor. The cofactor is Mg(2+).

It catalyses the reaction (2R)-2,3-dihydroxy-3-methylbutanoate = 3-methyl-2-oxobutanoate + H2O. The enzyme catalyses (2R,3R)-2,3-dihydroxy-3-methylpentanoate = (S)-3-methyl-2-oxopentanoate + H2O. It functions in the pathway amino-acid biosynthesis; L-isoleucine biosynthesis; L-isoleucine from 2-oxobutanoate: step 3/4. The protein operates within amino-acid biosynthesis; L-valine biosynthesis; L-valine from pyruvate: step 3/4. Functionally, functions in the biosynthesis of branched-chain amino acids. Catalyzes the dehydration of (2R,3R)-2,3-dihydroxy-3-methylpentanoate (2,3-dihydroxy-3-methylvalerate) into 2-oxo-3-methylpentanoate (2-oxo-3-methylvalerate) and of (2R)-2,3-dihydroxy-3-methylbutanoate (2,3-dihydroxyisovalerate) into 2-oxo-3-methylbutanoate (2-oxoisovalerate), the penultimate precursor to L-isoleucine and L-valine, respectively. The protein is Dihydroxy-acid dehydratase of Arthrobacter sp. (strain FB24).